The chain runs to 302 residues: Methionyl-tRNA formyltransferase (302 aa).

Residue 103–106 (SLLP) coordinates (6S)-5,6,7,8-tetrahydrofolate.

It belongs to the Fmt family.

The catalysed reaction is L-methionyl-tRNA(fMet) + (6R)-10-formyltetrahydrofolate = N-formyl-L-methionyl-tRNA(fMet) + (6S)-5,6,7,8-tetrahydrofolate + H(+). Functionally, attaches a formyl group to the free amino group of methionyl-tRNA(fMet). The formyl group appears to play a dual role in the initiator identity of N-formylmethionyl-tRNA by promoting its recognition by IF2 and preventing the misappropriation of this tRNA by the elongation apparatus. This Pseudothermotoga lettingae (strain ATCC BAA-301 / DSM 14385 / NBRC 107922 / TMO) (Thermotoga lettingae) protein is Methionyl-tRNA formyltransferase.